Reading from the N-terminus, the 248-residue chain is uncharacterized protein (248 aa).

Substrate is bound at residue Ser141. Tyr154 functions as the Proton acceptor in the catalytic mechanism.

Belongs to the short-chain dehydrogenases/reductases (SDR) family.

This is an uncharacterized protein from Methylorubrum extorquens (strain ATCC 14718 / DSM 1338 / JCM 2805 / NCIMB 9133 / AM1) (Methylobacterium extorquens).